A 76-amino-acid polypeptide reads, in one-letter code: U1-cyrtautoxin-As1b (76 aa).

4 cysteine pairs are disulfide-bonded: cysteine 23/cysteine 37, cysteine 30/cysteine 51, cysteine 36/cysteine 66, and cysteine 69/cysteine 76.

It belongs to the neurotoxin 21 family. As to expression, expressed by the venom gland.

The protein resides in the secreted. Its function is as follows. Neurotoxin with probable ion channel impairing activity. Is both paralytic and lethal, when injected into lepidopteran larvae. The sequence is that of U1-cyrtautoxin-As1b from Apomastus schlingeri (Trap-door spider).